Consider the following 1157-residue polypeptide: Probable ATP-dependent RNA helicase DHX37 (1157 aa).

The segment covering 1–10 (MGKLRRRYNI) has biased composition (basic residues). Disordered stretches follow at residues 1 to 77 (MGKL…KKEK) and 116 to 225 (TSKL…AAPP). The segment covering 21–30 (SKGPPEPPPV) has biased composition (pro residues). Residues 159 to 184 (AEEEEEEEEESESELEEESELDEDPA) show a composition bias toward acidic residues. Pro residues-rich tracts occupy residues 198–208 (PLPPAPAPSSQ) and 216–225 (VPPPPAAAPP). Positions 262–429 (MEAVAEHPIV…PRLFAKPPPV (168 aa)) constitute a Helicase ATP-binding domain. Residue 275-282 (GETGSGKT) coordinates ATP. A DEAH box motif is present at residues 372–375 (DEAH). One can recognise a Helicase C-terminal domain in the interval 459–716 (KVCKIHRMLP…DLILQMKALN (258 aa)). Disordered regions lie at residues 494 to 523 (PPSR…SRAR) and 542 to 584 (VLPA…QPDA). The segment covering 499-515 (RPQEKDDDQKDSVEEMR) has biased composition (basic and acidic residues). The segment covering 547–571 (EGDEDREAEVDEEEGALDSDLDLDL) has biased composition (acidic residues).

Belongs to the DEAD box helicase family. DEAH subfamily. As to quaternary structure, part of the small subunit (SSU) processome, composed of more than 70 proteins and the RNA chaperone small nucleolar RNA (snoRNA) U3. Interacts with UTP14A. Expressed in the fallopian tube, ovary, uterus and testis. Also expressed in the brain.

The protein localises to the nucleus. The protein resides in the nucleolus. It is found in the cytoplasm. Its subcellular location is the nucleus membrane. It carries out the reaction ATP + H2O = ADP + phosphate + H(+). ATP-binding RNA helicase that plays a role in maturation of the small ribosomal subunit in ribosome biogenesis. Required for the release of the U3 snoRNP from pre-ribosomal particles. Part of the small subunit (SSU) processome, first precursor of the small eukaryotic ribosomal subunit. During the assembly of the SSU processome in the nucleolus, many ribosome biogenesis factors, an RNA chaperone and ribosomal proteins associate with the nascent pre-rRNA and work in concert to generate RNA folding, modifications, rearrangements and cleavage as well as targeted degradation of pre-ribosomal RNA by the RNA exosome. Plays a role in early testis development. Probably also plays a role in brain development. The polypeptide is Probable ATP-dependent RNA helicase DHX37 (Homo sapiens (Human)).